The sequence spans 118 residues: Ig heavy chain V region X24 (118 aa).

Positions 1–111 (EVKLLESGGG…GYFDYWGQGT (111 aa)) constitute an Ig-like domain.

This Mus musculus (Mouse) protein is Ig heavy chain V region X24.